The primary structure comprises 509 residues: ATP synthase subunit alpha (509 aa).

Residue 169–176 (GDRQTGKT) participates in ATP binding.

It belongs to the ATPase alpha/beta chains family. F-type ATPases have 2 components, CF(1) - the catalytic core - and CF(0) - the membrane proton channel. CF(1) has five subunits: alpha(3), beta(3), gamma(1), delta(1), epsilon(1). CF(0) has three main subunits: a(1), b(2) and c(9-12). The alpha and beta chains form an alternating ring which encloses part of the gamma chain. CF(1) is attached to CF(0) by a central stalk formed by the gamma and epsilon chains, while a peripheral stalk is formed by the delta and b chains.

Its subcellular location is the cell inner membrane. It carries out the reaction ATP + H2O + 4 H(+)(in) = ADP + phosphate + 5 H(+)(out). In terms of biological role, produces ATP from ADP in the presence of a proton gradient across the membrane. The alpha chain is a regulatory subunit. This is ATP synthase subunit alpha from Brucella suis biovar 1 (strain 1330).